We begin with the raw amino-acid sequence, 464 residues long: Cytoplasmic tRNA 2-thiolation protein 2 (464 aa).

It belongs to the CTU2/NCS2 family.

It localises to the cytoplasm. The protein operates within tRNA modification; 5-methoxycarbonylmethyl-2-thiouridine-tRNA biosynthesis. Functionally, plays a central role in 2-thiolation of mcm(5)S(2)U at tRNA wobble positions of tRNA(Lys), tRNA(Glu) and tRNA(Gln). May act by forming a heterodimer with NCS6/CTU1 that ligates sulfur from thiocarboxylated URM1 onto the uridine of tRNAs at wobble position. This is Cytoplasmic tRNA 2-thiolation protein 2 from Oryza sativa subsp. indica (Rice).